Reading from the N-terminus, the 413-residue chain is Hemolin (413 aa).

Positions 1-18 (MASKSLVVLSACIIIGSA) are cleaved as a signal peptide. 4 Ig-like C2-type domains span residues 25 to 112 (PVLK…RVIS), 122 to 211 (PAKT…GEVR), 233 to 322 (PQYL…LKVT), and 327 to 413 (PKYV…VQVN). 4 cysteine pairs are disulfide-bonded: C46–C97, C140–C199, C252–C305, and C349–C395. An N-linked (GlcNAc...) asparagine glycan is attached at N283.

It belongs to the hemolin family. Expressed in larval bristles.

The protein localises to the secreted. Increased activity in presence of phospholipids (low concentrations) and calcium ions. Inhibited by PMSF. Not affected by EDTA and E-64. In terms of biological role, bristle toxin involved in caterpillar defense by participating in hemorrhagic syndrome characterized by a consumptive coagulopathy. Exhibits procoagulant activity through selective factor X proteolytic activation. Activates factor X in a dose- and time-dependent manner but does not activate gamma-carboxyglutamic acid domainless factor X. Its activity does not depend on calcium ions. Also functions as a growth stimulator and an inhibitor of cellular death for endothelial cells. In vitro, increases proliferation of human umbilical vein endothelial cells (HUVEC) and inhibits the apoptosis induced by starvation. Also increases slightly the complement decay-accelerating factor (CD55), which protects cells from complement-mediated lysis. On the other hand, does not alter the release or expression of von Willebrand factor (VWF), tissue factor (F3), intercellular adhesion molecule-1 (ICAM1), interleukin-8 (CXCL8), and prostacyclin. Does not show fibrinolytic or fibrinogenolytic activities. This Lonomia obliqua (Moth) protein is Hemolin.